A 445-amino-acid chain; its full sequence is UDP-N-acetylmuramoylalanine--D-glutamate ligase (445 aa).

Gly117–Thr123 lines the ATP pocket.

The protein belongs to the MurCDEF family.

The protein localises to the cytoplasm. The catalysed reaction is UDP-N-acetyl-alpha-D-muramoyl-L-alanine + D-glutamate + ATP = UDP-N-acetyl-alpha-D-muramoyl-L-alanyl-D-glutamate + ADP + phosphate + H(+). It participates in cell wall biogenesis; peptidoglycan biosynthesis. Its function is as follows. Cell wall formation. Catalyzes the addition of glutamate to the nucleotide precursor UDP-N-acetylmuramoyl-L-alanine (UMA). This Neisseria gonorrhoeae (strain NCCP11945) protein is UDP-N-acetylmuramoylalanine--D-glutamate ligase.